The primary structure comprises 230 residues: Large ribosomal subunit protein uL1 (230 aa).

This sequence belongs to the universal ribosomal protein uL1 family. As to quaternary structure, part of the 50S ribosomal subunit.

Its function is as follows. Binds directly to 23S rRNA. The L1 stalk is quite mobile in the ribosome, and is involved in E site tRNA release. Functionally, protein L1 is also a translational repressor protein, it controls the translation of the L11 operon by binding to its mRNA. The polypeptide is Large ribosomal subunit protein uL1 (Bradyrhizobium sp. (strain BTAi1 / ATCC BAA-1182)).